A 147-amino-acid polypeptide reads, in one-letter code: Succinate dehydrogenase assembly factor 2, mitochondrial (147 aa).

It belongs to the SDHAF2 family. Interacts with the flavoprotein subunit within the SDH catalytic dimer.

Its subcellular location is the mitochondrion matrix. In terms of biological role, plays an essential role in the assembly of succinate dehydrogenase (SDH), an enzyme complex (also referred to as respiratory complex II) that is a component of both the tricarboxylic acid (TCA) cycle and the mitochondrial electron transport chain, and which couples the oxidation of succinate to fumarate with the reduction of ubiquinone (coenzyme Q) to ubiquinol. Required for flavinylation (covalent attachment of FAD) of the flavoprotein subunit of the SDH catalytic dimer. The polypeptide is Succinate dehydrogenase assembly factor 2, mitochondrial (Drosophila grimshawi (Hawaiian fruit fly)).